A 490-amino-acid chain; its full sequence is Calcium-dependent protein kinase 12 (490 aa).

The 259-residue stretch at Y22 to I280 folds into the Protein kinase domain. ATP contacts are provided by residues L28 to T36 and K51. D146 (proton acceptor) is an active-site residue. A Phosphoserine modification is found at S186. The interval A286 to I316 is autoinhibitory domain. 4 consecutive EF-hand domains span residues E323–E358, L359–L394, E395–N430, and L434–T464. Ca(2+) contacts are provided by D336, D338, S340, T342, E347, D372, D374, S376, T378, E383, D408, D410, S412, Y414, E419, D442, D444, D446, Q448, and E453.

It belongs to the protein kinase superfamily. Ser/Thr protein kinase family. CDPK subfamily. In terms of assembly, interacts weakly with DI19. As to expression, ubiquitously expressed.

The catalysed reaction is L-seryl-[protein] + ATP = O-phospho-L-seryl-[protein] + ADP + H(+). It catalyses the reaction L-threonyl-[protein] + ATP = O-phospho-L-threonyl-[protein] + ADP + H(+). Activated by calcium. Autophosphorylation may play an important role in the regulation of the kinase activity. Its function is as follows. May play a role in signal transduction pathways that involve calcium as a second messenger. This chain is Calcium-dependent protein kinase 12 (CPK12), found in Arabidopsis thaliana (Mouse-ear cress).